Consider the following 196-residue polypeptide: Putative 3-methyladenine DNA glycosylase (196 aa).

It belongs to the DNA glycosylase MPG family.

This is Putative 3-methyladenine DNA glycosylase from Bacillus velezensis (strain DSM 23117 / BGSC 10A6 / LMG 26770 / FZB42) (Bacillus amyloliquefaciens subsp. plantarum).